The primary structure comprises 106 residues: Large ribosomal subunit protein uL24 (106 aa).

Residues 84-97 show a composition bias toward basic and acidic residues; it reads EKIGRELGAKEKAR. The segment at 84-106 is disordered; the sequence is EKIGRELGAKEKARLQKRKAAAK.

Belongs to the universal ribosomal protein uL24 family. As to quaternary structure, part of the 50S ribosomal subunit.

Functionally, one of two assembly initiator proteins, it binds directly to the 5'-end of the 23S rRNA, where it nucleates assembly of the 50S subunit. One of the proteins that surrounds the polypeptide exit tunnel on the outside of the subunit. This chain is Large ribosomal subunit protein uL24, found in Anaeromyxobacter dehalogenans (strain 2CP-C).